A 270-amino-acid polypeptide reads, in one-letter code: uncharacterized protein (270 aa).

Residues leucine 235–aspartate 270 are disordered. The span at serine 238–glutamate 251 shows a compositional bias: acidic residues. Residues asparagine 255–aspartate 270 show a composition bias toward low complexity.

This is an uncharacterized protein from Halorubrum sp. PV6 (HRPV-1).